The sequence spans 487 residues: CUGBP Elav-like family member 1 (487 aa).

An N-acetylmethionine modification is found at methionine 1. Threonine 4 bears the Phosphothreonine mark. RRM domains follow at residues isoleucine 16 to serine 99 and arginine 108 to threonine 188. A Glycyl lysine isopeptide (Lys-Gly) (interchain with G-Cter in SUMO2) cross-link involves residue lysine 109. 2 positions are modified to phosphoserine: serine 179 and serine 303. The tract at residues threonine 277–valine 310 is disordered. The span at alanine 283 to valine 310 shows a compositional bias: low complexity. Residues alanine 402 to serine 480 form the RRM 3 domain.

This sequence belongs to the CELF/BRUNOL family. Interacts with HNRNPH1; the interaction in RNA-dependent. Interacts with PARN. Component of an EIF2 complex at least composed of CELF1/CUGBP1, CALR, CALR3, EIF2S1, EIF2S2, HSP90B1 and HSPA5. Associates with polysomes.

The protein resides in the nucleus. It is found in the cytoplasm. Its function is as follows. RNA-binding protein implicated in the regulation of several post-transcriptional events. Involved in pre-mRNA alternative splicing, mRNA translation and stability. Mediates exon inclusion and/or exclusion in pre-mRNA that are subject to tissue-specific and developmentally regulated alternative splicing. Specifically activates exon 5 inclusion of cardiac isoforms of TNNT2 during heart remodeling at the juvenile to adult transition. Acts both as an activator and as a repressor of a pair of coregulated exons: promotes inclusion of the smooth muscle (SM) exon but exclusion of the non-muscle (NM) exon in actinin pre-mRNAs. Activates SM exon 5 inclusion by antagonizing the repressive effect of PTB. Promotes exclusion of exon 11 of the INSR pre-mRNA. Inhibits, together with HNRNPH1, insulin receptor (IR) pre-mRNA exon 11 inclusion in myoblast. Increases translation and controls the choice of translation initiation codon of CEBPB mRNA. Increases mRNA translation of CEBPB in aging liver. Increases translation of CDKN1A mRNA by antagonizing the repressive effect of CALR3. Mediates rapid cytoplasmic mRNA deadenylation. Recruits the deadenylase PARN to the poly(A) tail of EDEN-containing mRNAs to promote their deadenylation. Required for completion of spermatogenesis. Binds to (CUG)n triplet repeats in the 3'-UTR of transcripts such as DMPK and to Bruno response elements (BREs). Binds to muscle-specific splicing enhancer (MSE) intronic sites flanking the alternative exon 5 of TNNT2 pre-mRNA. Binds to AU-rich sequences (AREs or EDEN-like) localized in the 3'-UTR of JUN and FOS mRNAs. Binds to the IR RNA. Binds to the 5'-region of CDKN1A and CEBPB mRNAs. Binds with the 5'-region of CEBPB mRNA in aging liver. May be a specific regulator of miRNA biogenesis. Binds to primary microRNA pri-MIR140 and, with CELF2, negatively regulates the processing to mature miRNA. The polypeptide is CUGBP Elav-like family member 1 (Celf1) (Rattus norvegicus (Rat)).